Consider the following 320-residue polypeptide: Pseudouridine-5'-phosphate glycosidase (320 aa).

Glutamate 25 acts as the Proton donor in catalysis. Substrate contacts are provided by lysine 85 and valine 105. Residue aspartate 137 coordinates Mn(2+). 139–141 (SAD) is a substrate binding site. Lysine 158 serves as the catalytic Nucleophile.

Belongs to the pseudouridine-5'-phosphate glycosidase family. In terms of assembly, homotrimer. Mn(2+) serves as cofactor.

It catalyses the reaction D-ribose 5-phosphate + uracil = psi-UMP + H2O. Catalyzes the reversible cleavage of pseudouridine 5'-phosphate (PsiMP) to ribose 5-phosphate and uracil. Functions biologically in the cleavage direction, as part of a pseudouridine degradation pathway. The chain is Pseudouridine-5'-phosphate glycosidase from Rhodospirillum centenum (strain ATCC 51521 / SW).